The chain runs to 20 residues: Putative phosphoglycerate kinase (20 aa).

This sequence belongs to the phosphoglycerate kinase family. Monomer.

The protein resides in the cytoplasm. The enzyme catalyses (2R)-3-phosphoglycerate + ATP = (2R)-3-phospho-glyceroyl phosphate + ADP. The protein operates within carbohydrate degradation; glycolysis; pyruvate from D-glyceraldehyde 3-phosphate: step 2/5. The protein is Putative phosphoglycerate kinase (pgk) of Clostridium pasteurianum.